The sequence spans 96 residues: Co-chaperonin GroES (96 aa).

It belongs to the GroES chaperonin family. Heptamer of 7 subunits arranged in a ring. Interacts with the chaperonin GroEL.

It localises to the cytoplasm. Functionally, together with the chaperonin GroEL, plays an essential role in assisting protein folding. The GroEL-GroES system forms a nano-cage that allows encapsulation of the non-native substrate proteins and provides a physical environment optimized to promote and accelerate protein folding. GroES binds to the apical surface of the GroEL ring, thereby capping the opening of the GroEL channel. The polypeptide is Co-chaperonin GroES (Shewanella frigidimarina (strain NCIMB 400)).